A 548-amino-acid chain; its full sequence is Membrane protein insertase YidC (548 aa).

The helical transmembrane segment at 6–26 threads the bilayer; sequence NLLVIALLFVSFMIWQAWEQD. The tract at residues 28-55 is disordered; that stretch reads NPQPQAQQTTQTTTTAAGSAADQGVPAS. Residues 30–50 show a composition bias toward low complexity; sequence QPQAQQTTQTTTTAAGSAADQ. Transmembrane regions (helical) follow at residues 350 to 370, 420 to 440, 458 to 478, and 499 to 519; these read FVGN…GIMY, LGGC…YYML, LSAQ…MFFI, and PVIF…YYIV.

The protein belongs to the OXA1/ALB3/YidC family. Type 1 subfamily. Interacts with the Sec translocase complex via SecD. Specifically interacts with transmembrane segments of nascent integral membrane proteins during membrane integration.

It is found in the cell inner membrane. Required for the insertion and/or proper folding and/or complex formation of integral membrane proteins into the membrane. Involved in integration of membrane proteins that insert both dependently and independently of the Sec translocase complex, as well as at least some lipoproteins. Aids folding of multispanning membrane proteins. In Escherichia coli (strain K12 / MC4100 / BW2952), this protein is Membrane protein insertase YidC.